The sequence spans 557 residues: Potassium-transporting ATPase potassium-binding subunit (557 aa).

A run of 12 helical transmembrane segments spans residues 5 to 25 (GFLL…PLGS), 63 to 83 (LSAI…MLLG), 132 to 152 (GLTV…FALI), 170 to 190 (LLRI…LFFI), 253 to 273 (FVQM…FGEV), 283 to 303 (LLWA…WAEV), 329 to 349 (VLVS…AVIA), 356 to 376 (ALGG…FGGV), 379 to 399 (GLYG…LMIG), 416 to 436 (LTAL…ALAM), 484 to 504 (LLAL…MAIA), and 526 to 546 (LFVG…FIPA).

The protein belongs to the KdpA family. As to quaternary structure, the system is composed of three essential subunits: KdpA, KdpB and KdpC.

The protein localises to the cell inner membrane. Part of the high-affinity ATP-driven potassium transport (or Kdp) system, which catalyzes the hydrolysis of ATP coupled with the electrogenic transport of potassium into the cytoplasm. This subunit binds the periplasmic potassium ions and delivers the ions to the membrane domain of KdpB through an intramembrane tunnel. This Escherichia coli O6:K15:H31 (strain 536 / UPEC) protein is Potassium-transporting ATPase potassium-binding subunit.